A 130-amino-acid chain; its full sequence is Histone H2A type 2-B (130 aa).

The disordered stretch occupies residues 1 to 22 (MSGRGKQGGKARAKAKSRSSRA). The residue at position 2 (Ser-2) is an N-acetylserine. Phosphoserine; by RPS6KA5 is present on Ser-2. A Citrulline; alternate modification is found at Arg-4. The residue at position 4 (Arg-4) is a Symmetric dimethylarginine; by PRMT5; alternate. Residues Lys-6 and Lys-10 each carry the N6-(2-hydroxyisobutyryl)lysine; alternate modification. Lys-6 bears the N6-(beta-hydroxybutyryl)lysine; alternate mark. Residues 7 to 19 (QGGKARAKAKSRS) are compositionally biased toward basic residues. Lys-10 bears the N6-lactoyllysine; alternate mark. Residue Lys-10 is modified to N6-succinyllysine; alternate. Residues Lys-14 and Lys-16 each participate in a glycyl lysine isopeptide (Lys-Gly) (interchain with G-Cter in ubiquitin) cross-link. At Lys-37 the chain carries N6-(2-hydroxyisobutyryl)lysine; alternate. N6-(beta-hydroxybutyryl)lysine; alternate is present on Lys-37. Lys-37 carries the post-translational modification N6-crotonyllysine; alternate. An N6-(2-hydroxyisobutyryl)lysine mark is found at Lys-75 and Lys-76. Position 96 is an N6-(2-hydroxyisobutyryl)lysine; alternate (Lys-96). Lys-96 is modified (N6-succinyllysine; alternate). Residue Lys-96 is modified to N6-glutaryllysine; alternate. Gln-105 bears the N5-methylglutamine mark. Lys-119 is modified (N6-(2-hydroxyisobutyryl)lysine; alternate). An N6-crotonyllysine; alternate mark is found at Lys-119 and Lys-120. Residues Lys-119 and Lys-120 each carry the N6-glutaryllysine; alternate modification. The residue at position 120 (Lys-120) is an N6-(beta-hydroxybutyryl)lysine; alternate. Lys-120 is covalently cross-linked (Glycyl lysine isopeptide (Lys-Gly) (interchain with G-Cter in ubiquitin); alternate). Thr-121 carries the post-translational modification Phosphothreonine; by DCAF1.

It belongs to the histone H2A family. In terms of assembly, the nucleosome is a histone octamer containing two molecules each of H2A, H2B, H3 and H4 assembled in one H3-H4 heterotetramer and two H2A-H2B heterodimers. The octamer wraps approximately 147 bp of DNA. In terms of processing, deiminated on Arg-4 in granulocytes upon calcium entry. Post-translationally, monoubiquitination of Lys-120 (H2AK119Ub) by RING1, TRIM37 and RNF2/RING2 complex gives a specific tag for epigenetic transcriptional repression and participates in X chromosome inactivation of female mammals. It is involved in the initiation of both imprinted and random X inactivation. Ubiquitinated H2A is enriched in inactive X chromosome chromatin. Ubiquitination of H2A functions downstream of methylation of 'Lys-27' of histone H3 (H3K27me). H2AK119Ub by RNF2/RING2 can also be induced by ultraviolet and may be involved in DNA repair. Following DNA double-strand breaks (DSBs), it is ubiquitinated through 'Lys-63' linkage of ubiquitin moieties by the E2 ligase UBE2N and the E3 ligases RNF8 and RNF168, leading to the recruitment of repair proteins to sites of DNA damage. Ubiquitination at Lys-14 and Lys-16 (H2AK13Ub and H2AK15Ub, respectively) in response to DNA damage is initiated by RNF168 that mediates monoubiquitination at these 2 sites, and 'Lys-63'-linked ubiquitin are then conjugated to monoubiquitin; RNF8 is able to extend 'Lys-63'-linked ubiquitin chains in vitro. Deubiquitinated by USP51 at Lys-14 and Lys-16 (H2AK13Ub and H2AK15Ub, respectively) after damaged DNA is repaired. H2AK119Ub and ionizing radiation-induced 'Lys-63'-linked ubiquitination (H2AK13Ub and H2AK15Ub) are distinct events. Phosphorylation on Ser-2 (H2AS1ph) is enhanced during mitosis. Phosphorylation on Ser-2 by RPS6KA5/MSK1 directly represses transcription. Acetylation of H3 inhibits Ser-2 phosphorylation by RPS6KA5/MSK1. Phosphorylation at Thr-121 (H2AT120ph) by DCAF1 is present in the regulatory region of many tumor suppresor genes and down-regulates their transcription. In terms of processing, symmetric dimethylation on Arg-4 by the PRDM1/PRMT5 complex may play a crucial role in the germ-cell lineage. Post-translationally, glutamine methylation at Gln-105 (H2AQ104me) by FBL is specifically dedicated to polymerase I. It is present at 35S ribosomal DNA locus and impairs binding of the FACT complex. Crotonylation (Kcr) is specifically present in male germ cells and marks testis-specific genes in post-meiotic cells, including X-linked genes that escape sex chromosome inactivation in haploid cells. Crotonylation marks active promoters and enhancers and confers resistance to transcriptional repressors. It is also associated with post-meiotically activated genes on autosomes. In terms of processing, hydroxybutyrylation of histones is induced by starvation. Post-translationally, lactylated in macrophages by EP300/P300 by using lactoyl-CoA directly derived from endogenous or exogenous lactate, leading to stimulates gene transcription.

It localises to the nucleus. The protein localises to the chromosome. Its function is as follows. Core component of nucleosome. Nucleosomes wrap and compact DNA into chromatin, limiting DNA accessibility to the cellular machineries which require DNA as a template. Histones thereby play a central role in transcription regulation, DNA repair, DNA replication and chromosomal stability. DNA accessibility is regulated via a complex set of post-translational modifications of histones, also called histone code, and nucleosome remodeling. The sequence is that of Histone H2A type 2-B from Mus musculus (Mouse).